The sequence spans 167 residues: 3-isopropylmalate dehydratase small subunit (167 aa).

Belongs to the LeuD family. LeuD type 2 subfamily. In terms of assembly, heterodimer of LeuC and LeuD.

The enzyme catalyses (2R,3S)-3-isopropylmalate = (2S)-2-isopropylmalate. Its pathway is amino-acid biosynthesis; L-leucine biosynthesis; L-leucine from 3-methyl-2-oxobutanoate: step 2/4. Catalyzes the isomerization between 2-isopropylmalate and 3-isopropylmalate, via the formation of 2-isopropylmaleate. The sequence is that of 3-isopropylmalate dehydratase small subunit from Sulfurimonas denitrificans (strain ATCC 33889 / DSM 1251) (Thiomicrospira denitrificans (strain ATCC 33889 / DSM 1251)).